The following is a 1215-amino-acid chain: Cellulose synthase-like protein D4 (1215 aa).

Disordered regions lie at residues 24–46 and 206–231; these read GGDAVVRRGSGLTSPVPRHSLGS and SDTDESDSVTDDDDDEAVSSSEERDQ. The segment covering 207–222 has biased composition (acidic residues); it reads DTDESDSVTDDDDDEA. 2 helical membrane passes run 321-341 and 352-372; these read AILSPYRLLIAIRLVALGFFL and AVWLWAMSVACEVWFAFSWLL. Residues Asp452 and Asp905 contribute to the active site. The next 6 helical transmembrane spans lie at 988–1008, 1014–1034, 1060–1080, 1114–1134, 1147–1167, and 1177–1197; these read VFLLAYCLLPAVSLFSGKFIV, TFLAFLLVITLTLCLLALLEI, PAAVLQGLLKVIAGVDISFTL, LMVPPVTIMMVNAVAIAVAAA, LLGGAFFSFWVLCHLYPFAKG, and TIVFVWSGLISMIISLLWVYI.

Belongs to the glycosyltransferase 2 family. Plant cellulose synthase-like D subfamily.

It localises to the golgi apparatus membrane. Its function is as follows. Thought to be a Golgi-localized beta-glycan synthase that polymerize the backbones of noncellulosic polysaccharides (hemicelluloses) of plant cell wall. The polypeptide is Cellulose synthase-like protein D4 (CSLD4) (Oryza sativa subsp. japonica (Rice)).